Consider the following 92-residue polypeptide: DNA-directed RNA polymerase subunit omega (92 aa).

Belongs to the RNA polymerase subunit omega family. As to quaternary structure, the RNAP catalytic core consists of 2 alpha, 1 beta, 1 beta' and 1 omega subunit. When a sigma factor is associated with the core the holoenzyme is formed, which can initiate transcription.

The catalysed reaction is RNA(n) + a ribonucleoside 5'-triphosphate = RNA(n+1) + diphosphate. Its function is as follows. Promotes RNA polymerase assembly. Latches the N- and C-terminal regions of the beta' subunit thereby facilitating its interaction with the beta and alpha subunits. The sequence is that of DNA-directed RNA polymerase subunit omega from Shewanella oneidensis (strain ATCC 700550 / JCM 31522 / CIP 106686 / LMG 19005 / NCIMB 14063 / MR-1).